Reading from the N-terminus, the 231-residue chain is Small ribosomal subunit protein uS3 (231 aa).

Residues 39-107 (IRELLHKELK…DVVINIVEIR (69 aa)) enclose the KH type-2 domain.

This sequence belongs to the universal ribosomal protein uS3 family. In terms of assembly, part of the 30S ribosomal subunit. Forms a tight complex with proteins S10 and S14.

Its function is as follows. Binds the lower part of the 30S subunit head. Binds mRNA in the 70S ribosome, positioning it for translation. The protein is Small ribosomal subunit protein uS3 of Nitrobacter hamburgensis (strain DSM 10229 / NCIMB 13809 / X14).